Reading from the N-terminus, the 407-residue chain is Imidazolonepropionase (407 aa).

Fe(3+)-binding residues include histidine 68 and histidine 70. Zn(2+)-binding residues include histidine 68 and histidine 70. The 4-imidazolone-5-propanoate site is built by arginine 77, tyrosine 140, and histidine 173. Tyrosine 140 is an N-formimidoyl-L-glutamate binding site. Residue histidine 238 participates in Fe(3+) binding. Histidine 238 is a binding site for Zn(2+). Glutamine 241 is a binding site for 4-imidazolone-5-propanoate. Residue aspartate 313 participates in Fe(3+) binding. Aspartate 313 lines the Zn(2+) pocket. N-formimidoyl-L-glutamate contacts are provided by asparagine 315 and glycine 317. Threonine 318 is a binding site for 4-imidazolone-5-propanoate.

This sequence belongs to the metallo-dependent hydrolases superfamily. HutI family. Zn(2+) serves as cofactor. Fe(3+) is required as a cofactor.

It is found in the cytoplasm. It catalyses the reaction 4-imidazolone-5-propanoate + H2O = N-formimidoyl-L-glutamate. It functions in the pathway amino-acid degradation; L-histidine degradation into L-glutamate; N-formimidoyl-L-glutamate from L-histidine: step 3/3. In terms of biological role, catalyzes the hydrolytic cleavage of the carbon-nitrogen bond in imidazolone-5-propanoate to yield N-formimidoyl-L-glutamate. It is the third step in the universal histidine degradation pathway. The protein is Imidazolonepropionase of Burkholderia ambifaria (strain MC40-6).